We begin with the raw amino-acid sequence, 564 residues long: Dihydroxy-acid dehydratase (564 aa).

C53 provides a ligand contact to [2Fe-2S] cluster. D85 is a binding site for Mg(2+). A [2Fe-2S] cluster-binding site is contributed by C126. The Mg(2+) site is built by D127 and K128. Residue K128 is modified to N6-carboxylysine. Residue C203 coordinates [2Fe-2S] cluster. E454 contacts Mg(2+). S480 functions as the Proton acceptor in the catalytic mechanism.

This sequence belongs to the IlvD/Edd family. As to quaternary structure, homodimer. [2Fe-2S] cluster serves as cofactor. The cofactor is Mg(2+).

It carries out the reaction (2R)-2,3-dihydroxy-3-methylbutanoate = 3-methyl-2-oxobutanoate + H2O. The catalysed reaction is (2R,3R)-2,3-dihydroxy-3-methylpentanoate = (S)-3-methyl-2-oxopentanoate + H2O. It participates in amino-acid biosynthesis; L-isoleucine biosynthesis; L-isoleucine from 2-oxobutanoate: step 3/4. It functions in the pathway amino-acid biosynthesis; L-valine biosynthesis; L-valine from pyruvate: step 3/4. Functionally, functions in the biosynthesis of branched-chain amino acids. Catalyzes the dehydration of (2R,3R)-2,3-dihydroxy-3-methylpentanoate (2,3-dihydroxy-3-methylvalerate) into 2-oxo-3-methylpentanoate (2-oxo-3-methylvalerate) and of (2R)-2,3-dihydroxy-3-methylbutanoate (2,3-dihydroxyisovalerate) into 2-oxo-3-methylbutanoate (2-oxoisovalerate), the penultimate precursor to L-isoleucine and L-valine, respectively. The sequence is that of Dihydroxy-acid dehydratase from Clavibacter michiganensis subsp. michiganensis (strain NCPPB 382).